Consider the following 943-residue polypeptide: Protein translocase subunit SecA (943 aa).

ATP-binding positions include Gln-77, Gly-95–Thr-99, and Asp-484.

This sequence belongs to the SecA family. In terms of assembly, monomer and homodimer. Part of the essential Sec protein translocation apparatus which comprises SecA, SecYEG and auxiliary proteins SecDF. Other proteins may also be involved.

Its subcellular location is the cell membrane. The protein localises to the cytoplasm. The enzyme catalyses ATP + H2O + cellular proteinSide 1 = ADP + phosphate + cellular proteinSide 2.. In terms of biological role, part of the Sec protein translocase complex. Interacts with the SecYEG preprotein conducting channel. Has a central role in coupling the hydrolysis of ATP to the transfer of proteins into and across the cell membrane, serving as an ATP-driven molecular motor driving the stepwise translocation of polypeptide chains across the membrane. This is Protein translocase subunit SecA from Mesoplasma florum (strain ATCC 33453 / NBRC 100688 / NCTC 11704 / L1) (Acholeplasma florum).